An 826-amino-acid chain; its full sequence is Homeobox-leucine zipper protein HDG5 (826 aa).

Disordered regions lie at residues 1–34 and 69–119; these read MLTM…IQNP and EMME…HRHT. The segment covering 23 to 34 has biased composition (low complexity); sequence PSSSSPGTIQNP. Over residues 88 to 105 the composition is skewed to basic and acidic residues; that stretch reads EDPKFGNESDVNELHDDE. Residues 110 to 119 show a composition bias toward basic residues; that stretch reads AKKKRYHRHT. The homeobox DNA-binding region spans 111–170; the sequence is KKKRYHRHTNRQIQEMEALFKENPHPDDKQRKRLSAELGLKPRQVKFWFQNRRTQMKAQQ. Residues 165-189 adopt a coiled-coil conformation; sequence QMKAQQDRNENVMLRAENDNLKSEN. The START domain occupies 314 to 558; that stretch reads ADEEKVIAME…LQRQCERIAS (245 aa).

It belongs to the HD-ZIP homeobox family. Class IV subfamily. As to expression, expressed in shoot apical meristem (SAM) with higher levels in L1 cells and the epidermal layer of young leaves. Expressed in the L1 of apical inflorescence meristems, early flower primordia, carpel and stamen filament epidermis, ovule primordia, nucellus and chalaze.

It is found in the nucleus. Functionally, probable transcription factor. Involved, together with PDF2, in the regulation of flower organs development by promoting the expression of APETALA 3 (AP3) in the epidermis and internal cell layers of developing flowers. In Arabidopsis thaliana (Mouse-ear cress), this protein is Homeobox-leucine zipper protein HDG5.